A 386-amino-acid polypeptide reads, in one-letter code: Methylthioribose-1-phosphate isomerase (386 aa).

The active-site Proton donor is the Asp-258.

The protein belongs to the eIF-2B alpha/beta/delta subunits family. MtnA subfamily.

The protein resides in the cytoplasm. The protein localises to the nucleus. It carries out the reaction 5-(methylsulfanyl)-alpha-D-ribose 1-phosphate = 5-(methylsulfanyl)-D-ribulose 1-phosphate. It participates in amino-acid biosynthesis; L-methionine biosynthesis via salvage pathway; L-methionine from S-methyl-5-thio-alpha-D-ribose 1-phosphate: step 1/6. In terms of biological role, catalyzes the interconversion of methylthioribose-1-phosphate (MTR-1-P) into methylthioribulose-1-phosphate (MTRu-1-P). This is Methylthioribose-1-phosphate isomerase from Uncinocarpus reesii (strain UAMH 1704).